A 1038-amino-acid polypeptide reads, in one-letter code: Ribosome quality control complex subunit 2 (1038 aa).

Residues 350 to 383 adopt a coiled-coil conformation; sequence ALRIQNQESQAQKKIDDARAENDRKIQALLDVQE. Disordered stretches follow at residues 459–499, 708–824, and 877–898; these read LNTS…MKRK, KTSG…DEPG, and QRKKEEIMKREVREDRKNKREK. The stretch at 713–768 forms a coiled coil; sequence EDNGDDDEEEEEEEEEEEEEEEEEEEEEEEEKEEEEKEEEQQQDEDDSNEVNGLEK. Acidic residues predominate over residues 714-761; the sequence is DNGDDDEEEEEEEEEEEEEEEEEEEEEEEEKEEEEKEEEQQQDEDDSN. Positions 780-794 are enriched in basic and acidic residues; sequence SFEHDNLEKDIEKHC. A compositionally biased stretch (polar residues) spans 795-805; the sequence is TISSDTDSDSG. Serine 797 carries the post-translational modification Phosphoserine. A coiled-coil region spans residues 830 to 912; that stretch reads IENINSNVRG…QALKFTKKEK (83 aa). The segment covering 877 to 894 has biased composition (basic and acidic residues); it reads QRKKEEIMKREVREDRKN.

Belongs to the NEMF family. As to quaternary structure, component of the ribosome quality control complex (RQC), composed of the E3 ubiquitin ligase RKR1/LTN1, RQC1 and RQC2, as well as CDC48 and its ubiquitin-binding cofactors associated with the 60S ribosomal subunit. RQC2 binds to the 40S-binding surface of tRNAs.

It is found in the cytoplasm. Its function is as follows. Key component of the ribosome quality control complex (RQC), a ribosome-associated complex that mediates the extraction of incompletely synthesized nascent chains from stalled ribosomes as well as their ubiquitin-mediated proteasomal degradation. Thereby, frees 60S subunit ribosomes from the stalled translation complex and prevents the accumulation of nascent polypeptide chains that are potentially toxic for the cell. Within the RQC complex, RQC2 specifically binds stalled 60S ribosomal subunits by recognizing an exposed, nascent chain-conjugated tRNA moiety and promotes the recruitment of RKR1/LTN1 to stalled 60S subunits. Following binding to stalled 60S ribosomal subunits, RQC2 mediates CAT tailing by recruiting alanine- and threonine-charged tRNA to the A-site and directing the elongation of stalled nascent chains independently of mRNA or 40S subunits, leading to non-templated C-terminal Ala and Thr extensions (CAT tails). CAT tails promote the RKR1/LTN1-mediated ubiquitination of incompletely synthesized nascent polypeptides: CAT tailing facilitates RKR1/LTN1-dependent ubiquitination by exposing lysine residues that would otherwise remain buried in the ribosomal exit tunnel. Following ubiquitination, incompletely synthesized nascent polypeptides are recognized by CDC48 and degraded by the proteasome. CAT-tailed proteins tend to aggregate and sequester chaperones and can induce proteotoxic stress; their RKR1/LTN1-dependent ubiquitination and degradation is required to prevent proteotoxic stress. The chain is Ribosome quality control complex subunit 2 from Saccharomyces cerevisiae (strain ATCC 204508 / S288c) (Baker's yeast).